The primary structure comprises 494 residues: Flavin-containing monooxygenase ustF2 (494 aa).

A signal peptide spans 1-21 (MANPQTTRVAVVGAGISGVLA). 13 to 18 (GAGISG) provides a ligand contact to FAD. A disordered region spans residues 73–93 (EPSYPAMKPSKADPPATNEQE). Residue 250–255 (GGGVSS) participates in NADP(+) binding. An N-linked (GlcNAc...) asparagine glycan is attached at N459.

This sequence belongs to the FMO family.

It functions in the pathway mycotoxin biosynthesis. Functionally, flavin-containing monooxygenase; part of the gene cluster that mediates the biosynthesis of the secondary metabolite ustiloxin B, an antimitotic tetrapeptide. First, ustA is processed by the subtilisin-like endoprotease Kex2 that is outside the ustiloxin B gene cluster, at the C-terminal side of Arg-Lys, after transfer to Golgi apparatus through the endoplasmic reticulum (ER). Cleavage by KEX2 generates 16 peptides YAIG-I to YAIG-XVI. To process the precursor peptide further, at least two peptidases are necessary to cleave the N-terminal and C-terminal sides of the Tyr-Ala-Ile-Gly core peptide which serves as backbone for the synthesis of ustiloxin B, through cyclization and modification of the tyrosine with a non-protein coding amino acid, norvaline. One of the two peptidases must be the serine peptidase ustP; and the other pepdidase is probably ustH. Macrocyclization of the core peptide derived from ustA requires the tyrosinase ustQ, as well as the homologous oxidases ustYa and ustYb, and leads to the production of the first cyclization product N-desmethylustiloxin F. For the formation of N-desmethylustiloxin F, three oxidation steps are required, hydroxylation at the benzylic position, hydroxylation at either the aromatic ring of Tyr or beta-position of Ile, and oxidative cyclization. UstQ may catalyze the oxidation of a phenol moiety, whereas the ustYa and ustYb are most likely responsible for the remaining two-step oxidations. N-desmethylustiloxin F is then methylated by ustM to yield ustiloxin F which in turn substrate of the cytochrome P450 monooxygenase ustC which catalyzes the formation of S-deoxyustiloxin H. The flavoprotein monooxygenases ustF1 and ustF2 then participate in the modification of the side chain of S-deoxyustiloxin H, leading to the synthesis of an oxime intermediate, via ustiloxin H. Finally, carboxylative dehydration performed by the cysteine desulfurase-like protein ustD yields ustiloxin B. The protein is Flavin-containing monooxygenase ustF2 of Aspergillus flavus (strain ATCC 200026 / FGSC A1120 / IAM 13836 / NRRL 3357 / JCM 12722 / SRRC 167).